Reading from the N-terminus, the 485-residue chain is N-succinylglutamate 5-semialdehyde dehydrogenase (485 aa).

An NAD(+)-binding site is contributed by 220–225 (GSANTG). Catalysis depends on residues glutamate 243 and cysteine 278.

Belongs to the aldehyde dehydrogenase family. AstD subfamily.

The catalysed reaction is N-succinyl-L-glutamate 5-semialdehyde + NAD(+) + H2O = N-succinyl-L-glutamate + NADH + 2 H(+). It functions in the pathway amino-acid degradation; L-arginine degradation via AST pathway; L-glutamate and succinate from L-arginine: step 4/5. In terms of biological role, catalyzes the NAD-dependent reduction of succinylglutamate semialdehyde into succinylglutamate. This is N-succinylglutamate 5-semialdehyde dehydrogenase from Vibrio vulnificus (strain YJ016).